The chain runs to 631 residues: Mitochondrial Rho GTPase (631 aa).

The Cytoplasmic portion of the chain corresponds to 1–605 (MRAGRVRPLR…TQADLKSSTF (605 aa)). Residues 15–181 (KKDVRILLVG…FYYAQKAVLH (167 aa)) enclose the Miro 1 domain. GTP-binding residues include Arg-27, Gly-29, Lys-30, Thr-31, and Ser-32. Thr-31 contacts Mg(2+). Position 70 (Asp-70) interacts with Mg(2+). Ser-72 lines the GTP pocket. Lys-105 is subject to N6-acetyllysine. GTP is bound by residues Asn-131, Lys-132, Asp-134, Ala-162, and Lys-163. Lys-166 is covalently cross-linked (Glycyl lysine isopeptide (Lys-Gly) (interchain with G-Cter in ubiquitin)). Residues 197–232 (ACIKALTRIFKISDQDNDGTLNDAELNFFQRICFNT) form the EF-hand 1 domain. The Ca(2+) site is built by Asp-210, Asp-212, Asp-214, Thr-216, and Glu-221. Lys-248 participates in a covalent cross-link: Glycyl lysine isopeptide (Lys-Gly) (interchain with G-Cter in ubiquitin). The region spanning 317-352 (HAYLFLQSTFDKHDLDRDCALSPDELKDLFQVFPYI) is the EF-hand 2 domain. Ca(2+)-binding residues include Asp-330, Asp-332, Asp-334, Ala-336, and Glu-341. The 164-residue stretch at 429 to 592 (RNVFRCNVIG…FVKLTTMAMY (164 aa)) folds into the Miro 2 domain. 11 residues coordinate GTP: Gly-441, Cys-442, Gly-443, Lys-444, Thr-445, Gly-446, Lys-460, Lys-541, Asp-543, Thr-571, and Cys-572. Position 441 (Gly-441) interacts with Mg(2+). Lys-585 participates in a covalent cross-link: Glycyl lysine isopeptide (Lys-Gly) (interchain with G-Cter in ubiquitin). Residues 606–628 (WLRASFGATVFAVVGFAMYRALL) form a helical; Anchor for type IV membrane protein membrane-spanning segment. Over 629–631 (KQR) the chain is Mitochondrial intermembrane.

It belongs to the mitochondrial Rho GTPase family. As to quaternary structure, homodimer. Interacts with the kinesin-binding proteins TRAK1/OIP106 and TRAK2/GRIF1, forming a link between mitochondria and the trafficking apparatus of the microtubules. Interacts with RAP1GDS1. Interacts with ARMCX1. Found in a complex with KIF5B, OGT, RHOT2 and TRAK1. Post-translationally, ubiquitinated by PRKN during mitophagy, leading to its degradation and enhancement of mitophagy. Deubiquitinated by USP30. Acetylation on Lys-105 decreases sensitivity of mitochondrial transport to elevated Ca(2+) levels, increases mitochondrial transport and promotes axon growth. Deacetylated by HDAC6 which blocks mitochondrial transport and mediates axon growth inhibition.

It is found in the mitochondrion outer membrane. The enzyme catalyses GTP + H2O = GDP + phosphate + H(+). It catalyses the reaction ATP + H2O = ADP + phosphate + H(+). The catalysed reaction is UTP + H2O = UDP + phosphate + H(+). In terms of biological role, atypical mitochondrial nucleoside-triphosphatase (NTPase) involved in mitochondrial trafficking. Probably involved in control of anterograde transport of mitochondria and their subcellular distribution. Promotes mitochondrial fission during high calcium conditions. Can hydrolyze GTP, ATP and UTP. This chain is Mitochondrial Rho GTPase, found in Rattus norvegicus (Rat).